Reading from the N-terminus, the 300-residue chain is Type II restriction enzyme HindIII (300 aa).

The catalysed reaction is Endonucleolytic cleavage of DNA to give specific double-stranded fragments with terminal 5'-phosphates.. Its function is as follows. A P subtype restriction enzyme that recognizes the double-stranded sequence 5'-AAGCTT-3' and cleaves after A-1. The polypeptide is Type II restriction enzyme HindIII (Haemophilus influenzae (strain ATCC 51907 / DSM 11121 / KW20 / Rd)).